Consider the following 414-residue polypeptide: Na(+)-translocating NADH-quinone reductase subunit B (414 aa).

4 consecutive transmembrane segments (helical) span residues 56–76 (IMIM…YNVG), 82–104 (ALNH…HYWL), 129–149 (FLPI…LFCM), and 164–184 (ILFA…LGIT). T236 is subject to FMN phosphoryl threonine. Transmembrane regions (helical) follow at residues 275 to 295 (VSTL…IASW), 297 to 317 (IIAG…VIGS), 325 to 345 (MPWH…FMAT), 358 to 378 (WAYG…NPAY), and 381 to 401 (GMML…HIVI).

It belongs to the NqrB/RnfD family. Composed of six subunits; NqrA, NqrB, NqrC, NqrD, NqrE and NqrF. FMN is required as a cofactor.

It localises to the cell inner membrane. It catalyses the reaction a ubiquinone + n Na(+)(in) + NADH + H(+) = a ubiquinol + n Na(+)(out) + NAD(+). Functionally, NQR complex catalyzes the reduction of ubiquinone-1 to ubiquinol by two successive reactions, coupled with the transport of Na(+) ions from the cytoplasm to the periplasm. NqrA to NqrE are probably involved in the second step, the conversion of ubisemiquinone to ubiquinol. In Vibrio anguillarum (Listonella anguillarum), this protein is Na(+)-translocating NADH-quinone reductase subunit B.